A 345-amino-acid chain; its full sequence is Leucine-rich repeat and transmembrane domain-containing protein 1 (345 aa).

Positions 1–27 (MKGELLLFSSVIVLLQVVCSCPDKCYC) are cleaved as a signal peptide. The LRRNT domain occupies 28-50 (QSSTNFVDCSQQGLAEIPSHLPP). Over 28–288 (QSSTNFVDCS…PANLRHAIAT (261 aa)) the chain is Extracellular. LRR repeat units lie at residues 51 to 72 (QTRTLHLQDNQIHHLPAFAFRS), 75 to 96 (WLMTLNLSNNSLSNLAPGAFHG), 99 to 120 (HLQVLNLTQNSLLSLESRLFHS), 123 to 144 (QLRELDLSSNNISHLPTSLGET), and 147 to 168 (NLTILAVQQNQLQQLDRALLES). N-linked (GlcNAc...) asparagine glycosylation is present at Asn104. N-linked (GlcNAc...) asparagine glycosylation is present at Asn147. Residues 180–234 (NLWKCNCHLLGLKLWLEKFVYKGGLTDGIICESPDTWKGKDLLRIPHELYQPCPL) enclose the LRRCT domain. A helical transmembrane segment spans residues 289 to 309 (VIITGVVCGIVCLMMLAAAIY). Residues 310–345 (GCTYAAITAQYHGGPLAQTNDPGKVEEKERFDSSPA) are Cytoplasmic-facing. A disordered region spans residues 326–345 (AQTNDPGKVEEKERFDSSPA). Over residues 332 to 345 (GKVEEKERFDSSPA) the composition is skewed to basic and acidic residues.

Its subcellular location is the membrane. The chain is Leucine-rich repeat and transmembrane domain-containing protein 1 (LRTM1) from Homo sapiens (Human).